Here is a 357-residue protein sequence, read N- to C-terminus: UPF0283 membrane protein BMEI0952 (357 aa).

The tract at residues methionine 1 to lysine 36 is disordered. The span at glutamate 27 to lysine 36 shows a compositional bias: basic and acidic residues. A run of 2 helical transmembrane segments spans residues isoleucine 78–leucine 98 and leucine 109–leucine 129.

This sequence belongs to the UPF0283 family.

The protein resides in the cell inner membrane. This chain is UPF0283 membrane protein BMEI0952, found in Brucella melitensis biotype 1 (strain ATCC 23456 / CCUG 17765 / NCTC 10094 / 16M).